A 303-amino-acid chain; its full sequence is 2-dehydropantoate 2-reductase (303 aa).

Residues 7–12 (GAGSLG), Arg35, Asn103, Ala129, and Arg131 each bind NADP(+). Asn103 contributes to the substrate binding site. Lys182 acts as the Proton donor in catalysis. The substrate site is built by Asn186, Asn190, Asn200, and Ser250. Glu262 lines the NADP(+) pocket.

The protein belongs to the ketopantoate reductase family.

The protein localises to the cytoplasm. The catalysed reaction is (R)-pantoate + NADP(+) = 2-dehydropantoate + NADPH + H(+). Its pathway is cofactor biosynthesis; (R)-pantothenate biosynthesis; (R)-pantoate from 3-methyl-2-oxobutanoate: step 2/2. Functionally, catalyzes the NADPH-dependent reduction of ketopantoate into pantoic acid. This Pseudomonas aeruginosa (strain ATCC 15692 / DSM 22644 / CIP 104116 / JCM 14847 / LMG 12228 / 1C / PRS 101 / PAO1) protein is 2-dehydropantoate 2-reductase (panE).